The primary structure comprises 304 residues: UTP--glucose-1-phosphate uridylyltransferase 1 (304 aa).

It belongs to the UDPGP type 2 family.

The catalysed reaction is alpha-D-glucose 1-phosphate + UTP + H(+) = UDP-alpha-D-glucose + diphosphate. It functions in the pathway carbohydrate metabolism; nucleotide-sugar metabolism. The sequence is that of UTP--glucose-1-phosphate uridylyltransferase 1 (hasC1) from Streptococcus pyogenes serotype M1.